The sequence spans 499 residues: Bifunctional purine biosynthesis protein PurH (499 aa).

The MGS-like domain maps to 1–144 (MIKRALISVF…KNFKDVVVLT (144 aa)).

This sequence belongs to the PurH family.

It catalyses the reaction (6R)-10-formyltetrahydrofolate + 5-amino-1-(5-phospho-beta-D-ribosyl)imidazole-4-carboxamide = 5-formamido-1-(5-phospho-D-ribosyl)imidazole-4-carboxamide + (6S)-5,6,7,8-tetrahydrofolate. The catalysed reaction is IMP + H2O = 5-formamido-1-(5-phospho-D-ribosyl)imidazole-4-carboxamide. The protein operates within purine metabolism; IMP biosynthesis via de novo pathway; 5-formamido-1-(5-phospho-D-ribosyl)imidazole-4-carboxamide from 5-amino-1-(5-phospho-D-ribosyl)imidazole-4-carboxamide (10-formyl THF route): step 1/1. It participates in purine metabolism; IMP biosynthesis via de novo pathway; IMP from 5-formamido-1-(5-phospho-D-ribosyl)imidazole-4-carboxamide: step 1/1. The protein is Bifunctional purine biosynthesis protein PurH of Clostridium botulinum (strain Langeland / NCTC 10281 / Type F).